Reading from the N-terminus, the 425-residue chain is UDP-N-acetylglucosamine 1-carboxyvinyltransferase (425 aa).

Position 22 to 23 (22 to 23 (KN)) interacts with phosphoenolpyruvate. Arg98 serves as a coordination point for UDP-N-acetyl-alpha-D-glucosamine. Cys122 acts as the Proton donor in catalysis. The residue at position 122 (Cys122) is a 2-(S-cysteinyl)pyruvic acid O-phosphothioketal. Residues 127–131 (RPVDQ), Asp313, and Ile335 each bind UDP-N-acetyl-alpha-D-glucosamine.

This sequence belongs to the EPSP synthase family. MurA subfamily.

The protein localises to the cytoplasm. The catalysed reaction is phosphoenolpyruvate + UDP-N-acetyl-alpha-D-glucosamine = UDP-N-acetyl-3-O-(1-carboxyvinyl)-alpha-D-glucosamine + phosphate. The protein operates within cell wall biogenesis; peptidoglycan biosynthesis. Functionally, cell wall formation. Adds enolpyruvyl to UDP-N-acetylglucosamine. This Xylella fastidiosa (strain M23) protein is UDP-N-acetylglucosamine 1-carboxyvinyltransferase.